We begin with the raw amino-acid sequence, 339 residues long: Anthranilate phosphoribosyltransferase (339 aa).

5-phospho-alpha-D-ribose 1-diphosphate-binding positions include glycine 79, 82 to 83 (GD), threonine 87, 89 to 92 (NIST), 107 to 115 (KHGNRAVSS), and serine 119. Glycine 79 contacts anthranilate. Serine 91 is a Mg(2+) binding site. Asparagine 110 contributes to the anthranilate binding site. Arginine 165 is a binding site for anthranilate. Residues aspartate 224 and glutamate 225 each coordinate Mg(2+).

The protein belongs to the anthranilate phosphoribosyltransferase family. In terms of assembly, homodimer. Requires Mg(2+) as cofactor.

The catalysed reaction is N-(5-phospho-beta-D-ribosyl)anthranilate + diphosphate = 5-phospho-alpha-D-ribose 1-diphosphate + anthranilate. It participates in amino-acid biosynthesis; L-tryptophan biosynthesis; L-tryptophan from chorismate: step 2/5. Functionally, catalyzes the transfer of the phosphoribosyl group of 5-phosphorylribose-1-pyrophosphate (PRPP) to anthranilate to yield N-(5'-phosphoribosyl)-anthranilate (PRA). The polypeptide is Anthranilate phosphoribosyltransferase (Geobacillus sp. (strain WCH70)).